Here is a 101-residue protein sequence, read N- to C-terminus: Integration host factor subunit alpha (101 aa).

This sequence belongs to the bacterial histone-like protein family. Heterodimer of an alpha and a beta chain.

Its function is as follows. This protein is one of the two subunits of integration host factor, a specific DNA-binding protein that functions in genetic recombination as well as in transcriptional and translational control. The protein is Integration host factor subunit alpha of Dinoroseobacter shibae (strain DSM 16493 / NCIMB 14021 / DFL 12).